A 132-amino-acid polypeptide reads, in one-letter code: Small ribosomal subunit protein uS11 (132 aa).

The span at 1-16 (MAAGMKGKRSRRRKER) shows a compositional bias: basic residues. The disordered stretch occupies residues 1 to 20 (MAAGMKGKRSRRRKERKNVE).

Belongs to the universal ribosomal protein uS11 family. As to quaternary structure, part of the 30S ribosomal subunit. Interacts with proteins S7 and S18. Binds to IF-3.

Its function is as follows. Located on the platform of the 30S subunit, it bridges several disparate RNA helices of the 16S rRNA. Forms part of the Shine-Dalgarno cleft in the 70S ribosome. This chain is Small ribosomal subunit protein uS11, found in Clostridium botulinum (strain Kyoto / Type A2).